We begin with the raw amino-acid sequence, 222 residues long: Germin-like protein subfamily 1 member 20 (222 aa).

A signal peptide spans 1 to 22; it reads MRVSQSLVPFAIIALVLSFVNA. Cysteine 32 and cysteine 48 are disulfide-bonded. The Cupin type-1 domain maps to 62–213; it reads SGLNVPGNTN…AFQLDASVVK (152 aa). Asparagine 77 carries N-linked (GlcNAc...) asparagine glycosylation. Residues histidine 110, histidine 112, glutamate 117, and histidine 159 each coordinate Mn(2+).

Belongs to the germin family. As to quaternary structure, oligomer (believed to be a pentamer but probably hexamer). In terms of tissue distribution, expressed in stems and developing embryos.

The protein resides in the secreted. It is found in the extracellular space. The protein localises to the apoplast. In terms of biological role, may play a role in plant defense. Probably has no oxalate oxidase activity even if the active site is conserved. The chain is Germin-like protein subfamily 1 member 20 (GLP5A) from Arabidopsis thaliana (Mouse-ear cress).